Here is a 457-residue protein sequence, read N- to C-terminus: G-protein coupled receptor 135 (457 aa).

The segment at 1 to 26 (MEEQARPPGRPAASATLQGSAHPGGA) is disordered. Residues 1 to 64 (MEEQARPPGR…EAAGSRGPAP (64 aa)) are Extracellular-facing. Asn47 carries N-linked (GlcNAc...) asparagine glycosylation. A helical membrane pass occupies residues 65 to 85 (LLWHGAAVAAQALVLLLIFLL). Residues 86–109 (SSLGNCAVMGVIVKHRQLRTVTNA) are Cytoplasmic-facing. A helical transmembrane segment spans residues 110–130 (FILSLSLSDLLTALLCLPAAF). Topologically, residues 131–156 (LDLFAPPGDSGPWRSFCAASRFFSSC) are extracellular. Residues 157–177 (FGIVSTFSVALISLDRYCAIV) traverse the membrane as a helical segment. Over 178 to 189 (RPPRDKLGRRRA) the chain is Cytoplasmic. The chain crosses the membrane as a helical span at residues 190–210 (LQLLAGAWLAALGFSLPWDLL). Topologically, residues 211 to 235 (RAPREPPAPQSFHRCLYRTSPDPAQ) are extracellular. Residues 236–256 (LGVAYSVGLVVACYLLPFLLM) form a helical membrane-spanning segment. Residues 257–295 (CFCRYHICKTVRLSDVRVRPMTTYARVLRFFSEVRTATT) are Cytoplasmic-facing. Residues 296 to 316 (VLIMIIFVMCCWGPYCFLVLL) form a helical membrane-spanning segment. The Extracellular segment spans residues 317–329 (AATRQGQATQAPS). Residues 330-350 (LLNVAAVWLTWANGAINPVIY) form a helical membrane-spanning segment. At 351–457 (AIRNPNISML…HNSETRDSSI (107 aa)) the chain is on the cytoplasmic side.

It belongs to the G-protein coupled receptor 1 family. Interacts with MTNR1B. Interacts with ARRB1 and ARRB2 in a spontaneous and agonist-independent manner; leading to the internalization of GPR135 in the endosomal compartment.

It is found in the cell membrane. The protein resides in the endosome membrane. Its function is as follows. Orphan receptor. Has spontaneous activity for beta-arrestin recruitment. Shows a reciprocal regulatory interaction with the melatonin receptor MTNR1B most likely through receptor heteromerization. The protein is G-protein coupled receptor 135 (Gpr135) of Mus musculus (Mouse).